Consider the following 408-residue polypeptide: Phosphoenolpyruvate/phosphate translocator 1, chloroplastic (408 aa).

Residues 1–85 (MQSSAVFSLS…SLDTNRFRTA (85 aa)) constitute a chloroplast transit peptide. Ala86 carries the post-translational modification N-acetylalanine. Transmembrane regions (helical) follow at residues 105 to 125 (VLEL…FNIY), 137 to 157 (MTVT…MWVL), 165 to 185 (ISGA…LGNL), 198 to 218 (FTHT…AMFL), 222 to 242 (PTPW…LASI), 283 to 303 (ITLF…VTFF), 324 to 346 (IYTK…YMIL), and 377 to 396 (VSPV…FLYS). Positions 124 to 241 (IYNKQVLKAL…PIVGGVALAS (118 aa)) constitute an EamA domain.

This sequence belongs to the TPT transporter family. PPT (TC 2.A.7.9) subfamily. In terms of tissue distribution, expressed in root columella, lateral root cap and root vasculature tissue. In leaves, highly expressed in xylem parenchyma cells. In flowers, expressed in sepals, petals, filaments of the stamens, anthers and stigma.

Its subcellular location is the plastid. The protein resides in the chloroplast membrane. Its function is as follows. Phosphoenolpyruvate/phosphate translocator that transports phosphoenolpyruvate (PEP), 2-phosphoglycerate, 3-phosphoglycerate and dihydroxyacetone phosphate. Imports PEP to the chloroplast stroma as one substrate of the shikimate pathway, from which aromatic amino acids and a variety of secondary products derive. Required for correct leaf mesophyll cell development and expression of chlorophyll a/b binding protein 3 (CAB3). This is Phosphoenolpyruvate/phosphate translocator 1, chloroplastic (PPT1) from Arabidopsis thaliana (Mouse-ear cress).